The following is a 1019-amino-acid chain: Insulin-degrading enzyme (1019 aa).

Residue histidine 108 coordinates Zn(2+). Glutamate 111 functions as the Proton acceptor in the catalytic mechanism. Zn(2+)-binding residues include histidine 112 and glutamate 189. The residue at position 192 (lysine 192) is an N6-succinyllysine. Substrate-binding positions include 336 to 342 (HLIGHEG) and 359 to 363 (LVGGQ). An ATP-binding site is contributed by arginine 429. Position 697 is an N6-succinyllysine (lysine 697). The SlyX motif motif lies at 853–858 (EKPPHY). 895 to 901 (DKPKKLS) contributes to the ATP binding site.

This sequence belongs to the peptidase M16 family. In terms of assembly, homodimer. Can also form homotetramers. (Microbial infection) Interacts (via N-terminus) with varicella-zoster virus (VZV) envelope glycoprotein E (via N-terminus); the membrane-associated isoform may function as an entry receptor for this virus. It depends on Zn(2+) as a cofactor. The N-terminus is blocked. In terms of tissue distribution, detected in brain and in cerebrospinal fluid (at protein level).

The protein localises to the cytoplasm. It localises to the cytosol. The protein resides in the cell membrane. It is found in the secreted. It catalyses the reaction Degradation of insulin, glucagon and other polypeptides. No action on proteins.. Its activity is regulated as follows. Activated by small peptides. Activated by ATP and GTP, and to a lesser extent by CTP, TTP and PPPi. Inhibited by bacitracin. In vitro modification of Cys residues impairs enzyme activity. In terms of biological role, plays a role in the cellular breakdown of insulin, APP peptides, IAPP peptides, natriuretic peptides, glucagon, bradykinin, kallidin, and other peptides, and thereby plays a role in intercellular peptide signaling. Substrate binding induces important conformation changes, making it possible to bind and degrade larger substrates, such as insulin. Contributes to the regulation of peptide hormone signaling cascades and regulation of blood glucose homeostasis via its role in the degradation of insulin, glucagon and IAPP. Plays a role in the degradation and clearance of APP-derived amyloidogenic peptides that are secreted by neurons and microglia. Degrades the natriuretic peptides ANP, BNP and CNP, inactivating their ability to raise intracellular cGMP. Also degrades an aberrant frameshifted 40-residue form of NPPA (fsNPPA) which is associated with familial atrial fibrillation in heterozygous patients. Involved in antigen processing. Produces both the N terminus and the C terminus of MAGEA3-derived antigenic peptide (EVDPIGHLY) that is presented to cytotoxic T lymphocytes by MHC class I. Its function is as follows. (Microbial infection) The membrane-associated isoform acts as an entry receptor for varicella-zoster virus (VZV). In Homo sapiens (Human), this protein is Insulin-degrading enzyme.